The chain runs to 143 residues: Nucleoside diphosphate kinase (143 aa).

Residues Lys11, Phe59, Arg87, Thr93, Arg104, and Asn114 each contribute to the ATP site. His117 (pros-phosphohistidine intermediate) is an active-site residue.

Belongs to the NDK family. In terms of assembly, homotetramer. The cofactor is Mg(2+).

It is found in the cytoplasm. The enzyme catalyses a 2'-deoxyribonucleoside 5'-diphosphate + ATP = a 2'-deoxyribonucleoside 5'-triphosphate + ADP. The catalysed reaction is a ribonucleoside 5'-diphosphate + ATP = a ribonucleoside 5'-triphosphate + ADP. Its function is as follows. Major role in the synthesis of nucleoside triphosphates other than ATP. The ATP gamma phosphate is transferred to the NDP beta phosphate via a ping-pong mechanism, using a phosphorylated active-site intermediate. The sequence is that of Nucleoside diphosphate kinase from Nitrosococcus oceani (strain ATCC 19707 / BCRC 17464 / JCM 30415 / NCIMB 11848 / C-107).